The sequence spans 364 residues: Peptide chain release factor 1 (364 aa).

Position 238 is an N5-methylglutamine (glutamine 238).

It belongs to the prokaryotic/mitochondrial release factor family. Methylated by PrmC. Methylation increases the termination efficiency of RF1.

The protein localises to the cytoplasm. In terms of biological role, peptide chain release factor 1 directs the termination of translation in response to the peptide chain termination codons UAG and UAA. The sequence is that of Peptide chain release factor 1 from Psychrobacter sp. (strain PRwf-1).